We begin with the raw amino-acid sequence, 74 residues long: DUP240 protein DFP2 (74 aa).

It belongs to the DUP/COS family.

The protein resides in the cytoplasm. It localises to the membrane. This is DUP240 protein DFP2 from Saccharomyces cerevisiae (strain ATCC 204508 / S288c) (Baker's yeast).